The primary structure comprises 185 residues: MSEEKQTPEQEAEVEAQEEAVQADTEEVTQDEQSAFQEKIDELQQLLDEKENKILRVQADFENYKRRARTEVETVQKYRSQHVVSDLLPALDNFERALGIDPDNEQAKSLLEGMQMVYRQLVEALKNEGVEPIEAVGKEFDPNLHQAVMQVEDENFDSNIVVEELQKGYKLKDRVIRPSMVKVNQ.

Positions 1–37 (MSEEKQTPEQEAEVEAQEEAVQADTEEVTQDEQSAFQ) are disordered.

Belongs to the GrpE family. In terms of assembly, homodimer.

It is found in the cytoplasm. In terms of biological role, participates actively in the response to hyperosmotic and heat shock by preventing the aggregation of stress-denatured proteins, in association with DnaK and GrpE. It is the nucleotide exchange factor for DnaK and may function as a thermosensor. Unfolded proteins bind initially to DnaJ; upon interaction with the DnaJ-bound protein, DnaK hydrolyzes its bound ATP, resulting in the formation of a stable complex. GrpE releases ADP from DnaK; ATP binding to DnaK triggers the release of the substrate protein, thus completing the reaction cycle. Several rounds of ATP-dependent interactions between DnaJ, DnaK and GrpE are required for fully efficient folding. The sequence is that of Protein GrpE from Bacillus pumilus (strain SAFR-032).